Consider the following 142-residue polypeptide: Large ribosomal subunit protein uL23 (142 aa).

A Glycyl lysine isopeptide (Lys-Gly) (interchain with G-Cter in SUMO) cross-link involves residue lysine 61.

The protein belongs to the universal ribosomal protein uL23 family. As to quaternary structure, component of the large ribosomal subunit (LSU). Mature yeast ribosomes consist of a small (40S) and a large (60S) subunit. The 40S small subunit contains 1 molecule of ribosomal RNA (18S rRNA) and 33 different proteins (encoded by 57 genes). The large 60S subunit contains 3 rRNA molecules (25S, 5.8S and 5S rRNA) and 46 different proteins (encoded by 81 genes). uL23 is associated with the polypeptide exit tunnel.

It is found in the cytoplasm. Component of the ribosome, a large ribonucleoprotein complex responsible for the synthesis of proteins in the cell. The small ribosomal subunit (SSU) binds messenger RNAs (mRNAs) and translates the encoded message by selecting cognate aminoacyl-transfer RNA (tRNA) molecules. The large subunit (LSU) contains the ribosomal catalytic site termed the peptidyl transferase center (PTC), which catalyzes the formation of peptide bonds, thereby polymerizing the amino acids delivered by tRNAs into a polypeptide chain. The nascent polypeptides leave the ribosome through a tunnel in the LSU and interact with protein factors that function in enzymatic processing, targeting, and the membrane insertion of nascent chains at the exit of the ribosomal tunnel. uL23 is a major component of the universal docking site for these factors at the polypeptide exit tunnel. This is Large ribosomal subunit protein uL23 from Saccharomyces cerevisiae (strain ATCC 204508 / S288c) (Baker's yeast).